The sequence spans 386 residues: 1-deoxy-D-xylulose 5-phosphate reductoisomerase (386 aa).

Residues threonine 13, glycine 14, serine 15, isoleucine 16, asparagine 40, and asparagine 122 each coordinate NADPH. Lysine 123 contributes to the 1-deoxy-D-xylulose 5-phosphate binding site. NADPH is bound at residue glutamate 124. Aspartate 148 contributes to the Mn(2+) binding site. 4 residues coordinate 1-deoxy-D-xylulose 5-phosphate: serine 149, glutamate 150, serine 177, and histidine 201. Glutamate 150 lines the Mn(2+) pocket. Glycine 207 contacts NADPH. Residues serine 214, asparagine 219, lysine 220, and glutamate 223 each coordinate 1-deoxy-D-xylulose 5-phosphate. Position 223 (glutamate 223) interacts with Mn(2+).

It belongs to the DXR family. Requires Mg(2+) as cofactor. Mn(2+) is required as a cofactor.

It catalyses the reaction 2-C-methyl-D-erythritol 4-phosphate + NADP(+) = 1-deoxy-D-xylulose 5-phosphate + NADPH + H(+). The protein operates within isoprenoid biosynthesis; isopentenyl diphosphate biosynthesis via DXP pathway; isopentenyl diphosphate from 1-deoxy-D-xylulose 5-phosphate: step 1/6. In terms of biological role, catalyzes the NADPH-dependent rearrangement and reduction of 1-deoxy-D-xylulose-5-phosphate (DXP) to 2-C-methyl-D-erythritol 4-phosphate (MEP). This Francisella tularensis subsp. holarctica (strain OSU18) protein is 1-deoxy-D-xylulose 5-phosphate reductoisomerase.